A 66-amino-acid polypeptide reads, in one-letter code: Large ribosomal subunit protein bL35 (66 aa).

Residues 1-23 (MPKMKTHRASAKRFKRTANGGLK) form a disordered region.

This sequence belongs to the bacterial ribosomal protein bL35 family.

This Lactobacillus helveticus (strain DPC 4571) protein is Large ribosomal subunit protein bL35.